Reading from the N-terminus, the 122-residue chain is MIQPQTYLNVADNSGARKLMCIRIIGASNRRYAHIGDVIVAVIKEAIPNTPLERSEVIRAVIVRTCKELKRNNGTIIRYDDNAAVVIDQEGNPKGTRVFGAIPRELRQLNFTKIVSLAPEVL.

Belongs to the universal ribosomal protein uL14 family. As to quaternary structure, part of the 50S ribosomal subunit.

The protein localises to the plastid. It localises to the chloroplast. Its function is as follows. Binds to 23S rRNA. This Capsella bursa-pastoris (Shepherd's purse) protein is Large ribosomal subunit protein uL14c.